The primary structure comprises 297 residues: Homoserine kinase (297 aa).

84–94 (PPARGLGSSAT) lines the ATP pocket.

The protein belongs to the GHMP kinase family. Homoserine kinase subfamily.

It is found in the cytoplasm. The enzyme catalyses L-homoserine + ATP = O-phospho-L-homoserine + ADP + H(+). The protein operates within amino-acid biosynthesis; L-threonine biosynthesis; L-threonine from L-aspartate: step 4/5. In terms of biological role, catalyzes the ATP-dependent phosphorylation of L-homoserine to L-homoserine phosphate. This is Homoserine kinase (thrB) from Aquifex aeolicus (strain VF5).